A 263-amino-acid chain; its full sequence is Adaptin ear-binding coat-associated protein 2 (263 aa).

Disordered regions lie at residues 166 to 194 (KKKEGAAGNPRVRPASTGGLSLLPPPPGG) and 219 to 263 (APSS…WVQF). Serine 181 is subject to Phosphoserine. 2 consecutive short sequence motifs (WXXF motif) follow at residues 240–243 (WGDF) and 260–263 (WVQF). Residues 246 to 263 (STGSTSSQTQPGTGWVQF) show a composition bias toward low complexity.

It belongs to the NECAP family. Interacts with AP1G1 and AP2A1 components of the adapter protein complexes AP-1 and AP-2. Interacts with the GAE domain proteins GGA1, GGA2 and GGA3.

The protein localises to the cytoplasmic vesicle. Its subcellular location is the clathrin-coated vesicle membrane. It localises to the cell membrane. Its function is as follows. Involved in endocytosis. The polypeptide is Adaptin ear-binding coat-associated protein 2 (NECAP2) (Homo sapiens (Human)).